The primary structure comprises 883 residues: Valine--tRNA ligase (883 aa).

Positions Pro-46–His-56 match the 'HIGH' region motif. The 'KMSKS' region signature appears at Lys-520 to Ser-524. Residue Lys-523 participates in ATP binding. A coiled-coil region spans residues Leu-809 to Arg-844.

This sequence belongs to the class-I aminoacyl-tRNA synthetase family. ValS type 1 subfamily. As to quaternary structure, monomer.

It is found in the cytoplasm. The enzyme catalyses tRNA(Val) + L-valine + ATP = L-valyl-tRNA(Val) + AMP + diphosphate. In terms of biological role, catalyzes the attachment of valine to tRNA(Val). As ValRS can inadvertently accommodate and process structurally similar amino acids such as threonine, to avoid such errors, it has a 'posttransfer' editing activity that hydrolyzes mischarged Thr-tRNA(Val) in a tRNA-dependent manner. The chain is Valine--tRNA ligase from Streptococcus thermophilus (strain CNRZ 1066).